We begin with the raw amino-acid sequence, 577 residues long: MNIQALLSEKVSQAMIAAGAPADCEPQVRQSAKVQFGDYQANGMMAVAKKLGMAPRQLAEQVLTHLDLSGIASKVEIAGPGFINIFLEPAFLAEQVQQALTSDRLGVSQPTRQTIVVDYSAPNVAKEMHVGHLRSTIIGDAAVRTLEFLGHHVIRANHVGDWGTQFGMLIAWLEKQQQENAGDMALADLEGFYRDAKKHYDEDEAFAERARNYVVKLQSGDTYFREMWRKLVDITMTQNQITYDRLNVTLTRDDVMGESLYNPMLPGIVADLKAKGLAVESEGATVVFLDEFKNKEGDPMGVIIQKKDGGYLYTTTDIACAKYRYETLHADRVLYYIDSRQHQHLMQAWTIVRKAGYVPDSVPLEHHMFGMMLGKDGKPFKTRTGGTVKLADLLDEALERARRLVAEKNPDMPADELEKLANAVGIGAVKYADLSKNRTTDYIFDWDNMLAFEGNTAPYMQYAYTRVLSVFRKADIDEQALASAPVIISEDREAQLAARLLQFEETLTVVAREGTPHVMCAYLYDVAGLFSGFYEHCPILSAENDAVRNSRLKLAQLTAKTLKLGLDTLGIETVERM.

The short motif at Pro-122–His-132 is the 'HIGH' region element.

Belongs to the class-I aminoacyl-tRNA synthetase family. Monomer.

The protein localises to the cytoplasm. It catalyses the reaction tRNA(Arg) + L-arginine + ATP = L-arginyl-tRNA(Arg) + AMP + diphosphate. The polypeptide is Arginine--tRNA ligase (Salmonella paratyphi A (strain ATCC 9150 / SARB42)).